The sequence spans 388 residues: Regulator of G-protein signaling 20 (388 aa).

Residues 138–199 are disordered; sequence PGRPSGGRPL…TPGAAPGQPG (62 aa). Positions 185–197 are enriched in low complexity; sequence PAAQDTPGAAPGQ. Residues 262-378 enclose the RGS domain; it reads SFDKLMVTPA…MNSAVYKDLL (117 aa).

Forms a complex with G(alpha)z/i2 subunits and mu-opioid receptors; the formation of this complex results in mu-opioid receptor desensitization. Interacts with OPRM1. Post-translationally, fatty acylated. Heavily palmitoylated in the cysteine string motif. N- and O-glycosylated in synapsomal membranes. In terms of processing, serine phosphorylated in synapsomal membranes. Post-translationally, sumoylated with SUMO1 and SUMO2 in synaptosomes. The sumoylated forms act as a scaffold for sequestering mu-opioid receptor-activated G(alpha) subunits. In terms of tissue distribution, isoform 5 is expressed in brain at high levels in the caudate nucleus and temporal lobe.

The protein localises to the membrane. It localises to the nucleus. Its subcellular location is the cytoplasm. In terms of biological role, inhibits signal transduction by increasing the GTPase activity of G protein alpha subunits thereby driving them into their inactive GDP-bound form. Binds selectively to G(z)-alpha and G(alpha)-i2 subunits, accelerates their GTPase activity and regulates their signaling activities. The G(z)-alpha activity is inhibited by the phosphorylation and palmitoylation of the G-protein. Negatively regulates mu-opioid receptor-mediated activation of the G-proteins. This Homo sapiens (Human) protein is Regulator of G-protein signaling 20 (RGS20).